A 288-amino-acid chain; its full sequence is CUF1-dependent copper transporter 1 (288 aa).

The N-linked (GlcNAc...) asparagine glycan is linked to Asn18. Residues 42–62 (MPSSAGATVGVCIGLFILAIF) traverse the membrane as a helical segment. 2 disordered regions span residues 106–125 (PVLF…YNPL) and 154–180 (RESQ…GSGV). Residues 158-167 (EGSSAPSYAH) are compositionally biased toward polar residues. The segment covering 168–177 (SQQGQAQAQG) has biased composition (low complexity). Residues 251-271 (LLMLVVMTFNIWWMISVVIGC) traverse the membrane as a helical segment.

This sequence belongs to the copper transporter (Ctr) (TC 1.A.56) family. SLC31A subfamily. Interacts with the copper acquisition factor BIM1.

It is found in the cell membrane. Functionally, high affinity copper transporter involved in Cu(+) import into the cell upon copper-limitating conditions. Functions with BIM1 and probably also FRE4 and FRE7, where FRE4 and FRE7 metalloreductases liberate the Cu(2+) bound to the BIM1 copper-binding site for subsequent import of Cu(+) into the cell by CTR1, via the reduction of BIM1-bound Cu(2+) to Cu(+) to reduce binding affinity for BIM1 but increase affinity for CTR1. The BIM1-CTR1 pathway for copper uptake plays a key role in colonization in the brain where copper amounts are low and thus in cryptococcal meningitis. This Cryptococcus neoformans var. grubii serotype A (strain H99 / ATCC 208821 / CBS 10515 / FGSC 9487) (Filobasidiella neoformans var. grubii) protein is CUF1-dependent copper transporter 1.